The primary structure comprises 554 residues: Valerianol synthase TPS1C (554 aa).

Residues D307 and D311 each contribute to the Mg(2+) site. Positions 326 to 330 (VQRWD) match the DDXXD motif motif. Positions 452, 456, and 460 each coordinate Mg(2+).

It belongs to the terpene synthase family. It depends on Mg(2+) as a cofactor.

It catalyses the reaction (2E,6E)-farnesyl diphosphate + H2O = valerianol + diphosphate. The protein operates within secondary metabolite biosynthesis; terpenoid biosynthesis. In terms of biological role, terpene synthase that catalyzes the biosynthesis of the terpene valerianol, which is a volatile compound of floral scent. This Camellia hiemalis (Camellia) protein is Valerianol synthase TPS1C.